A 298-amino-acid chain; its full sequence is ATP phosphoribosyltransferase (298 aa).

It belongs to the ATP phosphoribosyltransferase family. Long subfamily. The cofactor is Mg(2+).

The protein localises to the cytoplasm. The enzyme catalyses 1-(5-phospho-beta-D-ribosyl)-ATP + diphosphate = 5-phospho-alpha-D-ribose 1-diphosphate + ATP. Its pathway is amino-acid biosynthesis; L-histidine biosynthesis; L-histidine from 5-phospho-alpha-D-ribose 1-diphosphate: step 1/9. Its activity is regulated as follows. Feedback inhibited by histidine. Its function is as follows. Catalyzes the condensation of ATP and 5-phosphoribose 1-diphosphate to form N'-(5'-phosphoribosyl)-ATP (PR-ATP). Has a crucial role in the pathway because the rate of histidine biosynthesis seems to be controlled primarily by regulation of HisG enzymatic activity. In Vibrio parahaemolyticus serotype O3:K6 (strain RIMD 2210633), this protein is ATP phosphoribosyltransferase.